We begin with the raw amino-acid sequence, 174 residues long: MATEVQFACALVVLLGCGYAGTPTPSKSTLIYNSQNCTTYPSIENGQSSLYYNGSWFIRYEFNCSSGYELQGWPYTTCIFWPKNGTIWTNGPPSCVKLNITTTLMPTSTSTTPVTTGTFPDPQNTTHPTHHTVKPTRRPINLLRFGYTPWAIITLVVIILLVVWIVNCCMGPMF.

Residues 1 to 20 form the signal peptide; sequence MATEVQFACALVVLLGCGYA. Residues 35 to 97 form the Sushi domain; the sequence is QNCTTYPSIE…WTNGPPSCVK (63 aa). 2 disulfides stabilise this stretch: Cys37/Cys78 and Cys64/Cys95. A compositionally biased stretch (low complexity) spans 108–127; the sequence is STSTTPVTTGTFPDPQNTTH. A disordered region spans residues 108 to 133; it reads STSTTPVTTGTFPDPQNTTHPTHHTV. Residues 145–165 traverse the membrane as a helical segment; that stretch reads FGYTPWAIITLVVIILLVVWI.

The protein localises to the host membrane. In Equine herpesvirus 2 (strain 86/87) (EHV-2), this protein is SUSHI domain-containing protein E3 (E3).